A 120-amino-acid polypeptide reads, in one-letter code: Large ribosomal subunit protein uL18 (120 aa).

It belongs to the universal ribosomal protein uL18 family. Part of the 50S ribosomal subunit; part of the 5S rRNA/L5/L18/L25 subcomplex. Contacts the 5S and 23S rRNAs.

In terms of biological role, this is one of the proteins that bind and probably mediate the attachment of the 5S RNA into the large ribosomal subunit, where it forms part of the central protuberance. This Rhodopseudomonas palustris (strain BisA53) protein is Large ribosomal subunit protein uL18.